The chain runs to 37 residues: Large ribosomal subunit protein bL36 (37 aa).

This sequence belongs to the bacterial ribosomal protein bL36 family.

This Chromohalobacter salexigens (strain ATCC BAA-138 / DSM 3043 / CIP 106854 / NCIMB 13768 / 1H11) protein is Large ribosomal subunit protein bL36.